The primary structure comprises 451 residues: Secreted RxLR effector protein 70 (451 aa).

The signal sequence occupies residues methionine 1–serine 17. The RxLR-dEER motif lies at arginine 48 to arginine 65. Positions aspartate 303–phenylalanine 336 are disordered. A compositionally biased stretch (polar residues) spans proline 305–threonine 323.

Belongs to the RxLR effector family.

It is found in the secreted. The protein localises to the host nucleus. Secreted effector that completely suppresses the host cell death induced by cell death-inducing proteins. In Plasmopara viticola (Downy mildew of grapevine), this protein is Secreted RxLR effector protein 70.